A 502-amino-acid polypeptide reads, in one-letter code: Glycerol kinase (502 aa).

An ADP-binding site is contributed by T14. Positions 14, 15, and 16 each coordinate ATP. T14 provides a ligand contact to sn-glycerol 3-phosphate. R18 lines the ADP pocket. The sn-glycerol 3-phosphate site is built by R84, E85, and Y136. The glycerol site is built by R84, E85, and Y136. H232 carries the phosphohistidine; by HPr modification. A sn-glycerol 3-phosphate-binding site is contributed by D246. Positions 246 and 247 each coordinate glycerol. Residues T268 and G311 each contribute to the ADP site. The ATP site is built by T268, G311, Q315, and G412. ADP contacts are provided by G412 and N416.

This sequence belongs to the FGGY kinase family. In terms of assembly, homotetramer and homodimer (in equilibrium). In terms of processing, the phosphoenolpyruvate-dependent sugar phosphotransferase system (PTS), including enzyme I, and histidine-containing protein (HPr) are required for the phosphorylation, which leads to the activation of the enzyme.

It catalyses the reaction glycerol + ATP = sn-glycerol 3-phosphate + ADP + H(+). The protein operates within polyol metabolism; glycerol degradation via glycerol kinase pathway; sn-glycerol 3-phosphate from glycerol: step 1/1. With respect to regulation, activated by phosphorylation and inhibited by fructose 1,6-bisphosphate (FBP). In terms of biological role, key enzyme in the regulation of glycerol uptake and metabolism. Catalyzes the phosphorylation of glycerol to yield sn-glycerol 3-phosphate. The protein is Glycerol kinase of Streptococcus pneumoniae (strain 70585).